The chain runs to 492 residues: Nuclear autoantigenic sperm protein homolog (492 aa).

The span at 1-14 shows a compositional bias: low complexity; it reads MSAEAEAIVTTATA. Disordered stretches follow at residues 1-52 and 123-254; these read MSAE…EQER and DVPD…EEGV. Phosphothreonine occurs at positions 32 and 33. Positions 124–145 are enriched in acidic residues; that stretch reads VPDEAADDDDEDVDDDEEESAE. Composition is skewed to basic and acidic residues over residues 147 to 159 and 170 to 179; these read GAAK…DTKE and KELDTIKEGS. Residues serine 179 and serine 184 each carry the phosphoserine modification. A Phosphothreonine modification is found at threonine 185. At serine 193 the chain carries Phosphoserine. The segment covering 226-238 has biased composition (polar residues); that stretch reads STSNGEVTASCSN. A compositionally biased stretch (acidic residues) spans 244–253; the sequence is VEEEPEEEEG. TPR repeat units lie at residues 284-317 and 326-359; these read AEVQ…HGEL and AELH…IEEE. Residues 377–400 adopt a coiled-coil conformation; sequence MLDLEETKQEILAKIQEIEEMQAQ. Low complexity predominate over residues 418–459; sequence SGDAAAASSSSSSSANGAASSSSSSSKGAAAASSSTISSSSA. Residues 418–492 are disordered; it reads SGDAAAASSS…LCSPAKRAAV (75 aa). Phosphoserine occurs at positions 478 and 485.

The protein belongs to the NASP family. In terms of assembly, interacts with the histone H3-H4 heterodimer; the interaction with H4 is probably indirect and mediated by H3 (His3, His3.3A and His3.3B). Interacts with His2Av; this interaction directly or indirectly destabilizes His2Av.

Its subcellular location is the cytoplasm. It localises to the nucleus. The protein resides in the perinuclear region. Component of the histone chaperone network. Binds and stabilizes histone H3-H4 not bound to chromatin to maintain a soluble reservoir and modulate degradation by chaperone-mediated autophagy. May also bind and stabilize monomeric H3. Maternal effect gene essential for early embryogenesis. The chain is Nuclear autoantigenic sperm protein homolog from Drosophila melanogaster (Fruit fly).